The primary structure comprises 138 residues: 6,7-dimethyl-8-ribityllumazine synthase (138 aa).

Residues F13, 45 to 47 (VFD), and 69 to 71 (AVI) contribute to the 5-amino-6-(D-ribitylamino)uracil site. 74–75 (AT) lines the (2S)-2-hydroxy-3-oxobutyl phosphate pocket. H77 functions as the Proton donor in the catalytic mechanism. Residue L102 coordinates 5-amino-6-(D-ribitylamino)uracil. Residue R117 coordinates (2S)-2-hydroxy-3-oxobutyl phosphate.

This sequence belongs to the DMRL synthase family.

It catalyses the reaction (2S)-2-hydroxy-3-oxobutyl phosphate + 5-amino-6-(D-ribitylamino)uracil = 6,7-dimethyl-8-(1-D-ribityl)lumazine + phosphate + 2 H2O + H(+). It participates in cofactor biosynthesis; riboflavin biosynthesis; riboflavin from 2-hydroxy-3-oxobutyl phosphate and 5-amino-6-(D-ribitylamino)uracil: step 1/2. Catalyzes the formation of 6,7-dimethyl-8-ribityllumazine by condensation of 5-amino-6-(D-ribitylamino)uracil with 3,4-dihydroxy-2-butanone 4-phosphate. This is the penultimate step in the biosynthesis of riboflavin. This Methanobrevibacter smithii (strain ATCC 35061 / DSM 861 / OCM 144 / PS) protein is 6,7-dimethyl-8-ribityllumazine synthase.